We begin with the raw amino-acid sequence, 1025 residues long: Multidrug resistance protein MdtC (1025 aa).

Transmembrane regions (helical) follow at residues 3–23 (FFAL…AITL), 333–353 (EVEQ…FLFL), 360–380 (IIPA…MYLC), 387–407 (LSLM…IVVL), 431–451 (VGFT…PLLL), 463–483 (FAVT…TLTP), 528–548 (LVGV…ISIP), 853–873 (VILI…LYES), 875–895 (VHPL…LLAL), 897–917 (LFNA…IGIV), 953–973 (PIMM…LSGG), and 984–1004 (ITIV…TPVV).

This sequence belongs to the resistance-nodulation-cell division (RND) (TC 2.A.6) family. MdtC subfamily. As to quaternary structure, part of a tripartite efflux system composed of MdtA, MdtB and MdtC. MdtC forms a heteromultimer with MdtB.

It is found in the cell inner membrane. Functionally, the MdtABC tripartite complex confers resistance against novobiocin and deoxycholate. The polypeptide is Multidrug resistance protein MdtC (Escherichia coli O139:H28 (strain E24377A / ETEC)).